A 66-amino-acid polypeptide reads, in one-letter code: UPF0370 protein YpfN (66 aa).

Residues 4 to 24 (LAKYWWILVLVFLVGVLLNVI) form a helical membrane-spanning segment. Residues 39-66 (KPELPPHRDFNDKWDDEDGWPKKDQPKK) are disordered. The span at 42-66 (LPPHRDFNDKWDDEDGWPKKDQPKK) shows a compositional bias: basic and acidic residues.

Belongs to the UPF0370 family.

It is found in the cell membrane. The sequence is that of UPF0370 protein YpfN from Salmonella paratyphi B (strain ATCC BAA-1250 / SPB7).